We begin with the raw amino-acid sequence, 176 residues long: ATP-dependent protease subunit HslV (176 aa).

Threonine 5 is a catalytic residue. Serine 161, cysteine 164, and threonine 167 together coordinate Na(+).

This sequence belongs to the peptidase T1B family. HslV subfamily. A double ring-shaped homohexamer of HslV is capped on each side by a ring-shaped HslU homohexamer. The assembly of the HslU/HslV complex is dependent on binding of ATP.

The protein resides in the cytoplasm. It carries out the reaction ATP-dependent cleavage of peptide bonds with broad specificity.. With respect to regulation, allosterically activated by HslU binding. Its function is as follows. Protease subunit of a proteasome-like degradation complex believed to be a general protein degrading machinery. This chain is ATP-dependent protease subunit HslV, found in Thermoanaerobacter pseudethanolicus (strain ATCC 33223 / 39E) (Clostridium thermohydrosulfuricum).